Consider the following 460-residue polypeptide: tRNA (guanine(10)-N(2))-methyltransferase TRMT11 (460 aa).

Position 2 is an N-acetylalanine (Ala2).

It belongs to the class I-like SAM-binding methyltransferase superfamily. TRM11 methyltransferase family. As to quaternary structure, part of the heterodimeric TRMT11-TRM112 methyltransferase complex; this complex forms an active tRNA methyltransferase, where TRMT112 acts as an activator of the catalytic subunit TRMT11.

The protein resides in the cytoplasm. The catalysed reaction is guanosine(10) in tRNA + S-adenosyl-L-methionine = N(2)-methylguanosine(10) in tRNA + S-adenosyl-L-homocysteine + H(+). Functionally, catalytic subunit of the TRMT11-TRM112 methyltransferase complex, that specifically mediates the S-adenosyl-L-methionine-dependent N(2)-methylation of guanosine nucleotide at position 10 (m2G10) in tRNAs. This is one of the major tRNA (guanine-N(2))-methyltransferases. This chain is tRNA (guanine(10)-N(2))-methyltransferase TRMT11, found in Bos taurus (Bovine).